Consider the following 468-residue polypeptide: Argininosuccinate lyase (468 aa).

Residues Ser-33, Asn-121, and Thr-166 each contribute to the 2-(N(omega)-L-arginino)succinate site. Catalysis depends on His-167, which acts as the Proton acceptor. The Proton donor role is filled by Ser-288. 4 residues coordinate 2-(N(omega)-L-arginino)succinate: Asn-296, Tyr-328, Gln-333, and Lys-336.

This sequence belongs to the lyase 1 family. Argininosuccinate lyase subfamily. In terms of assembly, homotetramer.

It carries out the reaction 2-(N(omega)-L-arginino)succinate = fumarate + L-arginine. Its pathway is amino-acid biosynthesis; L-arginine biosynthesis; L-arginine from L-ornithine and carbamoyl phosphate: step 3/3. This Candida albicans (Yeast) protein is Argininosuccinate lyase (ARG4).